A 487-amino-acid polypeptide reads, in one-letter code: Epstein-Barr nuclear antigen 2 (487 aa).

Positions 1-210 (MPTFYLALHG…TPPTPLPPAT (210 aa)) are SMARCB1/INI1 binding. Disordered regions lie at residues 52–121 (VGEN…LGYD) and 258–487 (SMHP…PSIQ). The span at 58–100 (VPPPLPPPPPPPPPPPPPPPPPPPPPPPPPPSPPPPPPPPPPP) shows a compositional bias: pro residues. Positions 101 to 118 (QRRDAWTQEPSPLDRDPL) are enriched in basic and acidic residues. Pro residues-rich tracts occupy residues 286 to 307 (PPMP…PPPG) and 319 to 333 (SGPP…PPQP). Positions 344-366 (SRGRGRGRGRGRGKGKSRDKQRK) are enriched in basic residues. Repeat copies occupy residues 345–346 (RG), 347–348 (RG), 349–350 (RG), 351–352 (RG), 353–354 (RG), 355–356 (RG), and 357–358 (KG). A 6.5 X 2 AA tandem repeats of R-G region spans residues 345–358 (RGRGRGRGRGRGKG). 2 consecutive short sequence motifs (PXLXP motif, interaction with host ZMYND11) follow at residues 383 to 387 (PELSP) and 437 to 441 (PILFP).

It belongs to the herpesviridae EBNA2 family. In terms of assembly, interacts with human SMARCB1/INI1, presumably generating an open chromatin conformation at the EBNA2-responsive target genes. Interacts with human WAPL. Interacts with host CBF1; this interaction allows transcriptional activation by EBNA2. Interacts with host general transcription factors GTF2B, ERCC2 and ERCC3. Interacts (via PXLXP motif) with host ZMYND11/BS69 (via MYND-type zinc finger). Interacts with host EBF1. Post-translationally, phosphorylated.

It is found in the host nucleus matrix. In terms of biological role, plays a key role in the activation of the host resting B-cell and stimulation of B-cell proliferation. Acts by up-regulating the expression of viral EBNA1-6, LMP1, LMP2A and LMP2B genes, as well as several host genes including CD21, CD23 and MYC. Activates transcription by acting as an adapter molecule that binds to cellular sequence-specific DNA-binding proteins such as host CBF1, SMARCB1 and SPI1. Once EBNA2 is near promoter sites, its acidic activating domain recruits basal and activation-associated transcription factors TFIIB, TAF40, TFIIH components ERCC2 and ERCC3, and CBP in order to promote transcription. Alternatively, EBNA2 can affect activities of cell cycle regulators and retard cell cycle progression at G2/M phase. It also induces chromosomal instability, by disrupting mitotic checkpoints, multi-nucleation and formation of micronuclei in infected cells. The chain is Epstein-Barr nuclear antigen 2 (EBNA2) from Homo sapiens (Human).